We begin with the raw amino-acid sequence, 459 residues long: Spermatogenesis-associated protein 1 (459 aa).

Over residues 193–205 (LKELPNKNQEEAG) the composition is skewed to basic and acidic residues. The tract at residues 193–213 (LKELPNKNQEEAGGKATAEKS) is disordered. Coiled coils occupy residues 287-374 (TDIS…YKKL) and 400-453 (LIIQ…KKII).

Interacts with IFT20.

Its subcellular location is the cytoplasmic vesicle. The protein resides in the secretory vesicle. The protein localises to the acrosome. The protein is Spermatogenesis-associated protein 1 (SPATA1) of Homo sapiens (Human).